The following is a 193-amino-acid chain: Holliday junction branch migration complex subunit RuvA (193 aa).

Positions 1–64 (MITSLTGTIL…EDAHLLYGFM (64 aa)) are domain I. The interval 65–139 (TVAERDMFRL…DKMGGIAPGP (75 aa)) is domain II. The interval 139–143 (PMGRG) is flexible linker. A domain III region spans residues 144-193 (GAGDPRQEAIAALLTLGYKPAQASQAIAGLADGLGLEDLIRQSLQNLSRH).

Belongs to the RuvA family. As to quaternary structure, homotetramer. Forms an RuvA(8)-RuvB(12)-Holliday junction (HJ) complex. HJ DNA is sandwiched between 2 RuvA tetramers; dsDNA enters through RuvA and exits via RuvB. An RuvB hexamer assembles on each DNA strand where it exits the tetramer. Each RuvB hexamer is contacted by two RuvA subunits (via domain III) on 2 adjacent RuvB subunits; this complex drives branch migration. In the full resolvosome a probable DNA-RuvA(4)-RuvB(12)-RuvC(2) complex forms which resolves the HJ.

It is found in the cytoplasm. Its function is as follows. The RuvA-RuvB-RuvC complex processes Holliday junction (HJ) DNA during genetic recombination and DNA repair, while the RuvA-RuvB complex plays an important role in the rescue of blocked DNA replication forks via replication fork reversal (RFR). RuvA specifically binds to HJ cruciform DNA, conferring on it an open structure. The RuvB hexamer acts as an ATP-dependent pump, pulling dsDNA into and through the RuvAB complex. HJ branch migration allows RuvC to scan DNA until it finds its consensus sequence, where it cleaves and resolves the cruciform DNA. In Acidithiobacillus ferrooxidans (strain ATCC 53993 / BNL-5-31) (Leptospirillum ferrooxidans (ATCC 53993)), this protein is Holliday junction branch migration complex subunit RuvA.